Consider the following 115-residue polypeptide: Nitrogenase-stabilizing/protective protein NifW (115 aa).

This sequence belongs to the NifW family. As to quaternary structure, homotrimer; associates with NifD.

Functionally, may protect the nitrogenase Fe-Mo protein from oxidative damage. The protein is Nitrogenase-stabilizing/protective protein NifW of Stutzerimonas stutzeri (strain A1501) (Pseudomonas stutzeri).